The chain runs to 324 residues: NADH-ubiquinone oxidoreductase chain 1 (324 aa).

9 helical membrane-spanning segments follow: residues 9 to 29, 43 to 63, 75 to 95, 106 to 126, 146 to 166, 177 to 197, 237 to 257, 259 to 279, and 299 to 319; these read IINP…LTLL, PNIV…KLFI, FLFL…WAPM, LGVL…LGSG, ISYE…TGGF, SIWL…STLA, ILLM…IPAF, ELTA…FLWV, and FLPL…AMAG.

Belongs to the complex I subunit 1 family.

Its subcellular location is the mitochondrion inner membrane. The catalysed reaction is a ubiquinone + NADH + 5 H(+)(in) = a ubiquinol + NAD(+) + 4 H(+)(out). Functionally, core subunit of the mitochondrial membrane respiratory chain NADH dehydrogenase (Complex I) that is believed to belong to the minimal assembly required for catalysis. Complex I functions in the transfer of electrons from NADH to the respiratory chain. The immediate electron acceptor for the enzyme is believed to be ubiquinone. In Salmo salar (Atlantic salmon), this protein is NADH-ubiquinone oxidoreductase chain 1 (MT-ND1).